The primary structure comprises 689 residues: ATP-dependent zinc metalloprotease FtsH 2 (689 aa).

At 1-3 (MRK) the chain is on the cytoplasmic side. Residues 4–24 (FFRGASFYILAFIIILFIVQN) traverse the membrane as a helical segment. At 25–111 (FGRPTQEIDE…SAAPPPTTPW (87 aa)) the chain is on the extracellular side. Residues 112–132 (FIELLPSIFMVLIFIVFWFVF) traverse the membrane as a helical segment. Topologically, residues 133–689 (MQQSQGGGNR…QDNEENRKEE (557 aa)) are cytoplasmic. 205–212 (GPPGTGKT) lines the ATP pocket. His427 is a binding site for Zn(2+). Residue Glu428 is part of the active site. Residues His431 and Asp503 each coordinate Zn(2+). Residues 661 to 673 (EELIEVSSDKEEE) are compositionally biased toward basic and acidic residues. The interval 661–689 (EELIEVSSDKEEEKDNQDDQDNEENRKEE) is disordered.

It in the central section; belongs to the AAA ATPase family. In the C-terminal section; belongs to the peptidase M41 family. In terms of assembly, homohexamer. Zn(2+) serves as cofactor.

It localises to the cell membrane. Its function is as follows. Acts as a processive, ATP-dependent zinc metallopeptidase for both cytoplasmic and membrane proteins. Plays a role in the quality control of integral membrane proteins. The polypeptide is ATP-dependent zinc metalloprotease FtsH 2 (Alkaliphilus metalliredigens (strain QYMF)).